The primary structure comprises 335 residues: DNA polymerase beta (335 aa).

A Glycyl lysine isopeptide (Lys-Gly) (interchain with G-Cter in ubiquitin) cross-link involves residue K41. K60 serves as a coordination point for K(+). Na(+) is bound at residue K60. A Glycyl lysine isopeptide (Lys-Gly) (interchain with G-Cter in ubiquitin) cross-link involves residue K61. The K(+) site is built by L62 and V65. 2 residues coordinate Na(+): L62 and V65. Catalysis depends on K72, which acts as the Nucleophile; Schiff-base intermediate with DNA; for 5'-dRP lyase activity. An N6-acetyllysine modification is found at K72. K81 is covalently cross-linked (Glycyl lysine isopeptide (Lys-Gly) (interchain with G-Cter in ubiquitin)). The residue at position 83 (R83) is an Omega-N-methylarginine; by PRMT6. T101, V103, and I106 together coordinate K(+). T101, V103, and I106 together coordinate Na(+). R149 serves as a coordination point for a 2'-deoxyribonucleoside 5'-triphosphate. R152 is subject to Omega-N-methylarginine; by PRMT6. The a 2'-deoxyribonucleoside 5'-triphosphate site is built by S180, R183, G189, and D190. The interval 183–192 is DNA-binding; it reads RGAESSGDMD. The Mg(2+) site is built by D190, D192, and D256.

This sequence belongs to the DNA polymerase type-X family. As to quaternary structure, monomer. Binds single-stranded DNA (ssDNA). Interacts with APEX1, LIG1, LIG3, FEN1, PCNA and XRCC1. Interacts with HUWE1/ARF-BP1, STUB1/CHIP and USP47. Interacts with FAM168A. Requires Mg(2+) as cofactor. Methylation by PRMT6 stimulates the polymerase activity by enhancing DNA binding and processivity. In terms of processing, ubiquitinated at Lys-41, Lys-61 and Lys-81: monoubiquitinated by HUWE1/ARF-BP1. Monoubiquitinated protein is then the target of STUB1/CHIP, which catalyzes polyubiquitination from monoubiquitin, leading to degradation by the proteasome. USP47 mediates the deubiquitination of monoubiquitinated protein, preventing polyubiquitination by STUB1/CHIP and its subsequent degradation.

The protein localises to the nucleus. It localises to the cytoplasm. It carries out the reaction DNA(n) + a 2'-deoxyribonucleoside 5'-triphosphate = DNA(n+1) + diphosphate. The enzyme catalyses a 5'-end 2'-deoxyribose-2'-deoxyribonucleotide-DNA = (2E,4S)-4-hydroxypenten-2-al-5-phosphate + a 5'-end 5'-phospho-2'-deoxyribonucleoside-DNA + H(+). It catalyses the reaction 2'-deoxyribonucleotide-(2'-deoxyribose 5'-phosphate)-2'-deoxyribonucleotide-DNA = a 3'-end 2'-deoxyribonucleotide-(2,3-dehydro-2,3-deoxyribose 5'-phosphate)-DNA + a 5'-end 5'-phospho-2'-deoxyribonucleoside-DNA + H(+). Its function is as follows. Repair polymerase that plays a key role in base-excision repair. During this process, the damaged base is excised by specific DNA glycosylases, the DNA backbone is nicked at the abasic site by an apurinic/apyrimidic (AP) endonuclease, and POLB removes 5'-deoxyribose-phosphate from the preincised AP site acting as a 5'-deoxyribose-phosphate lyase (5'-dRP lyase); through its DNA polymerase activity, it adds one nucleotide to the 3' end of the arising single-nucleotide gap. Conducts 'gap-filling' DNA synthesis in a stepwise distributive fashion rather than in a processive fashion as for other DNA polymerases. It is also able to cleave sugar-phosphate bonds 3' to an intact AP site, acting as an AP lyase. This Mus musculus (Mouse) protein is DNA polymerase beta (Polb).